A 134-amino-acid polypeptide reads, in one-letter code: MGLTYQLLPALVCLLACTSFIQGCKYDITLQEIIKTLNLTDGKGKNSCMELTVADAFGPKNTDGKEICRAAKVLQQYKRHDRSLIKECLSGLDRNLKGMANGTCCTVNEAKKSTLKDFLERLKTIMKEKYSKCS.

The signal sequence occupies residues 1–23 (MGLTYQLLPALVCLLACTSFIQG). Cystine bridges form between cysteine 24–cysteine 133 and cysteine 48–cysteine 88. The N-linked (GlcNAc...) asparagine glycan is linked to asparagine 38. An N-linked (GlcNAc...) asparagine glycan is attached at asparagine 101.

The protein belongs to the IL-4/IL-13 family.

It localises to the secreted. Functionally, participates in at least several B-cell activation processes as well as of other cell types. It is a costimulator of DNA-synthesis. It induces the expression of class II MHC molecules on resting B-cells. It enhances both secretion and cell surface expression of IgE and IgG1. It also regulates the expression of the low affinity Fc receptor for IgE (CD23) on both lymphocytes and monocytes. Positively regulates IL31RA expression in macrophages. Stimulates autophagy in dendritic cells by interfering with mTORC1 signaling and through the induction of RUFY4. The sequence is that of Interleukin-4 (IL4) from Equus caballus (Horse).